A 232-amino-acid chain; its full sequence is 5'-methylthioadenosine/S-adenosylhomocysteine nucleosidase (232 aa).

Glutamate 12 functions as the Proton acceptor in the catalytic mechanism. Substrate is bound by residues glycine 78, isoleucine 152, and 173 to 174 (ME). Residue aspartate 197 is the Proton donor of the active site.

The protein belongs to the PNP/UDP phosphorylase family. MtnN subfamily. Homodimer.

The catalysed reaction is S-adenosyl-L-homocysteine + H2O = S-(5-deoxy-D-ribos-5-yl)-L-homocysteine + adenine. It carries out the reaction S-methyl-5'-thioadenosine + H2O = 5-(methylsulfanyl)-D-ribose + adenine. It catalyses the reaction 5'-deoxyadenosine + H2O = 5-deoxy-D-ribose + adenine. Its pathway is amino-acid biosynthesis; L-methionine biosynthesis via salvage pathway; S-methyl-5-thio-alpha-D-ribose 1-phosphate from S-methyl-5'-thioadenosine (hydrolase route): step 1/2. Functionally, catalyzes the irreversible cleavage of the glycosidic bond in both 5'-methylthioadenosine (MTA) and S-adenosylhomocysteine (SAH/AdoHcy) to adenine and the corresponding thioribose, 5'-methylthioribose and S-ribosylhomocysteine, respectively. Also cleaves 5'-deoxyadenosine, a toxic by-product of radical S-adenosylmethionine (SAM) enzymes, into 5-deoxyribose and adenine. Thus, is required for in vivo function of the radical SAM enzymes biotin synthase and lipoic acid synthase, that are inhibited by 5'-deoxyadenosine accumulation. This chain is 5'-methylthioadenosine/S-adenosylhomocysteine nucleosidase, found in Citrobacter koseri (strain ATCC BAA-895 / CDC 4225-83 / SGSC4696).